We begin with the raw amino-acid sequence, 176 residues long: MKHPIVKHFLSNPQHYRLFKNVMESPNEKDARSLDELFKQFYKEIRIVKYMNSMIRIFSIDFDKRVRKNQKRYPLTVDHPEAGDRLSSETGSDAFEEFLDRQDDLSQHVQDYQLYQAIQKLTDKQKSVLTKVYLHGATMQEIADSLGESRQNISNIHKKGLENIRKQLAAQKKGEK.

The Polymerase core binding signature appears at 30–43 (DARSLDELFKQFYK). Positions 139-158 (MQEIADSLGESRQNISNIHK) form a DNA-binding region, H-T-H motif.

It belongs to the sigma-70 factor family. As to quaternary structure, interacts with RNA polymerase.

Functionally, sigma factors are initiation factors that promote the attachment of RNA polymerase to specific initiation sites and are then released. Together with its coactivator RsoA, positively regulates the expression of at least three operons, including oxdC-yvrL, sigO-rsoA and yvrJ. Required for the acid stress-dependent induction of the oxalate decarboxylase oxdC. This chain is RNA polymerase sigma factor SigO (sigO), found in Bacillus subtilis (strain 168).